The following is a 337-amino-acid chain: Ferrochelatase (337 aa).

Residues His-189 and Glu-293 each coordinate Fe cation.

The protein belongs to the ferrochelatase family.

The protein resides in the cytoplasm. The enzyme catalyses heme b + 2 H(+) = protoporphyrin IX + Fe(2+). It functions in the pathway porphyrin-containing compound metabolism; protoheme biosynthesis; protoheme from protoporphyrin-IX: step 1/1. Functionally, catalyzes the ferrous insertion into protoporphyrin IX. The chain is Ferrochelatase from Pseudomonas entomophila (strain L48).